The chain runs to 568 residues: Kinetochore protein NDC80 homolog (568 aa).

The disordered stretch occupies residues 1–59 (MRGGAAGKRRTTVGFGGAPPPPPPSIEQQRHLFNSRDSDASFASSRPSSIGLGGRGASD). Residues 28-39 (QQRHLFNSRDSD) show a composition bias toward basic and acidic residues. Positions 40–49 (ASFASSRPSS) are enriched in low complexity. Coiled-coil stretches lie at residues 241–334 (KESL…AEVA) and 433–469 (IESKRSLLGSIQLQINDLEEKMKLVKKETQELSTKCD).

It belongs to the NDC80/HEC1 family. In terms of assembly, component of the NDC80 complex, which consists of NDC80, NUF2, SPC24 and SPC25.

It is found in the chromosome. The protein localises to the centromere. Functionally, acts as a component of the essential kinetochore-associated NDC80 complex, which is required for chromosome segregation and spindle checkpoint activity to ensure proper cell division. This Arabidopsis thaliana (Mouse-ear cress) protein is Kinetochore protein NDC80 homolog.